The primary structure comprises 103 residues: Small ribosomal subunit protein uS10 (103 aa).

Belongs to the universal ribosomal protein uS10 family. As to quaternary structure, part of the 30S ribosomal subunit.

Involved in the binding of tRNA to the ribosomes. This is Small ribosomal subunit protein uS10 from Neorickettsia sennetsu (strain ATCC VR-367 / Miyayama) (Ehrlichia sennetsu).